A 350-amino-acid polypeptide reads, in one-letter code: Chlorophyll a/b light-harvesting protein PcbA (350 aa).

6 consecutive transmembrane segments (helical) span residues 26–46, 62–82, 87–107, 214–234, 248–268, and 309–329; these read LSAH…ITLF, LILI…GQVV, YFVI…GALY, IAVV…FPWA, LSAS…FSAV, and LCNV…WHAL.

The protein belongs to the PsbB/PsbC family. IsiA/Pcb subfamily. In terms of assembly, the antenna complex consists of chlorophylls (a and b) and chlorophyll a/b binding proteins. It depends on chlorophyll a as a cofactor. The cofactor is chlorophyll b.

It localises to the cellular thylakoid membrane. Its function is as follows. The antenna complex functions as a light receptor, it captures and delivers excitation energy to photosystems II and I. The Prochlorales pcb genes are not related to higher plant LHCs. The chain is Chlorophyll a/b light-harvesting protein PcbA (pcbA) from Prochlorothrix hollandica.